We begin with the raw amino-acid sequence, 288 residues long: uncharacterized protein (288 aa).

A signal peptide spans 1–27 (MKFEFRTLVLISLAVVVVLSGCSQSPS). The tract at residues 144 to 167 (GESGEAGGAGEQLPASDQASGEEP) is disordered.

This is an uncharacterized protein from Archaeoglobus fulgidus (strain ATCC 49558 / DSM 4304 / JCM 9628 / NBRC 100126 / VC-16).